The chain runs to 369 residues: Sulfate permease 2, chloroplastic (369 aa).

The segment at 1-21 (MASTTLLQPALGLPSRVGPRS) is disordered. A chloroplast-targeting transit peptide spans 1 to 82 (MASTTLLQPA…QQSRGDLLVS (82 aa)). 5 consecutive transmembrane segments (helical) span residues 110–130 (VGVAAAYIGLVVLVPFLNVFV), 156–176 (TLMLAFVTVPLNTVFGTVAAI), 187–207 (VFLMSLLDLPFSISPVVTGLM), 229–249 (VVFAFTGMALATMFVTLPFVV), and 335–355 (TEAAFAAAVLLSALALGTLWI). An ABC transmembrane type-1 domain is found at 153–356 (LKMTLMLAFV…ALALGTLWIK (204 aa)).

Belongs to the ATP-binding cassette (ABC) (TC 3.A.1) superfamily. As to quaternary structure, part of the chloroplast sulfate permease holocomplex. May form a heterodimer with SLUP1.

Its subcellular location is the plastid. It is found in the chloroplast membrane. Functionally, part of the ABC-type chloroplast envelope-localized sulfate transporter. The protein is Sulfate permease 2, chloroplastic (SULP2) of Chlamydomonas reinhardtii (Chlamydomonas smithii).